The following is a 307-amino-acid chain: Protoheme IX farnesyltransferase (307 aa).

The next 9 membrane-spanning stretches (helical) occupy residues 31–51 (VTQLAVFCAIIGMFLATPGMV), 55–75 (VLIGGAAGIWLLAGAAFAINC), 103–123 (TLVFSAILGGAGMWLLHVYAN), 125–145 (LTMWLTFATFLGYAVVYTILL), 153–173 (IVIGGLSGAMPPALGWAAVAG), 179–199 (AWFLVLIIFTWTPPHFWALAL), 223–243 (LLHILLYTLIMIAATLLPFVY), 246–266 (SGYIYLAAALALGAGFLAYAW), and 285–305 (ILYLSLLFAALLVDHYFKFVP).

It belongs to the UbiA prenyltransferase family. Protoheme IX farnesyltransferase subfamily.

The protein localises to the cell inner membrane. The catalysed reaction is heme b + (2E,6E)-farnesyl diphosphate + H2O = Fe(II)-heme o + diphosphate. The protein operates within porphyrin-containing compound metabolism; heme O biosynthesis; heme O from protoheme: step 1/1. In terms of biological role, converts heme B (protoheme IX) to heme O by substitution of the vinyl group on carbon 2 of heme B porphyrin ring with a hydroxyethyl farnesyl side group. The polypeptide is Protoheme IX farnesyltransferase (Cupriavidus necator (strain ATCC 17699 / DSM 428 / KCTC 22496 / NCIMB 10442 / H16 / Stanier 337) (Ralstonia eutropha)).